The sequence spans 492 residues: Malonate-semialdehyde dehydrogenase (492 aa).

The NAD(+) site is built by Phe156, Lys180, Glu183, Lys184, Ser233, and Thr255. Cys288 (nucleophile) is an active-site residue. Residue Glu387 coordinates NAD(+).

It belongs to the aldehyde dehydrogenase family. IolA subfamily. Homotetramer.

The catalysed reaction is 3-oxopropanoate + NAD(+) + CoA + H2O = hydrogencarbonate + acetyl-CoA + NADH + H(+). It carries out the reaction 2-methyl-3-oxopropanoate + NAD(+) + CoA + H2O = propanoyl-CoA + hydrogencarbonate + NADH + H(+). It functions in the pathway polyol metabolism; myo-inositol degradation into acetyl-CoA; acetyl-CoA from myo-inositol: step 7/7. Its function is as follows. Catalyzes the oxidation of malonate semialdehyde (MSA) and methylmalonate semialdehyde (MMSA) into acetyl-CoA and propanoyl-CoA, respectively. Is involved in a myo-inositol catabolic pathway. Bicarbonate, and not CO2, is the end-product of the enzymatic reaction. The chain is Malonate-semialdehyde dehydrogenase from Lacticaseibacillus casei (Lactobacillus casei).